We begin with the raw amino-acid sequence, 513 residues long: Putative GMP synthase [glutamine-hydrolyzing] (513 aa).

The Glutamine amidotransferase type-1 domain occupies 8–198 (MIVVLDFGGQ…AFAVCGCEGN (191 aa)). Cys85 serves as the catalytic Nucleophile. Residue Glu174 is part of the active site. The region spanning 199 to 388 (WSMENFIELE…LGIPDEVVWR (190 aa)) is the GMPS ATP-PPase domain. 226 to 232 (SGGVDSS) provides a ligand contact to ATP.

As to quaternary structure, homodimer.

It carries out the reaction XMP + L-glutamine + ATP + H2O = GMP + L-glutamate + AMP + diphosphate + 2 H(+). The protein operates within purine metabolism; GMP biosynthesis; GMP from XMP (L-Gln route): step 1/1. Functionally, catalyzes the synthesis of GMP from XMP. This chain is Putative GMP synthase [glutamine-hydrolyzing] (guaA), found in Halalkalibacterium halodurans (strain ATCC BAA-125 / DSM 18197 / FERM 7344 / JCM 9153 / C-125) (Bacillus halodurans).